The sequence spans 456 residues: Transcription factor tau subunit sfc1 (456 aa).

2 disordered regions span residues 394–416 (DRYSNFDEQDNTDLNDTVRGLNT) and 437–456 (HEGFEDLEEIDDDYDDIFGD). The span at 407-416 (LNDTVRGLNT) shows a compositional bias: polar residues. The span at 441–456 (EDLEEIDDDYDDIFGD) shows a compositional bias: acidic residues.

Component of the TFIIIC complex including sfc1, sfc3, sfc4, sfc6 and sfc7. The subunits are organized in two globular domains, tauA and tauB, connected by a proteolysis-sensitive and flexible linker. Interacts with sfc3, sfc4 and sfc6. In terms of processing, phosphorylated.

It is found in the nucleus. TFIIIC mediates tRNA and 5S RNA gene activation by binding to intragenic promoter elements. Upstream of the transcription start site, TFIIIC assembles the initiation complex TFIIIB-TFIIIC-tDNA, which is sufficient for RNA polymerase III recruitment and function. Part of the tauA domain of TFIIIC that binds boxA DNA promoter sites of tRNA and similar genes. Participates in the interconnection of tauA with tauB via its contacts with sfc3 and sfc6. Serves as a scaffold critical for tauA-DNA spatial configuration and tauB-DNA stability. Localizes to chromatin insulator sequence without recruiting RNA polymerase III and plays a role in nuclear organization. The sequence is that of Transcription factor tau subunit sfc1 (sfc1) from Schizosaccharomyces pombe (strain 972 / ATCC 24843) (Fission yeast).